The following is a 299-amino-acid chain: NmrA-like family domain-containing protein 1 (299 aa).

Residues 11 to 16 (GGTGAQ), 37 to 41 (RNPRK), 58 to 59 (DQ), Gln62, 79 to 81 (TNY), Lys92, Lys133, and 155 to 158 (YFEN) each bind NADP(+). The interaction with ASS1 stretch occupies residues 153 to 189 (PCYFENLLSHFLPQKAPDGKSYLLSLPTGDVPMDGMS).

This sequence belongs to the NmrA-type oxidoreductase family. As to quaternary structure, homodimer. Interacts with ASS1. Interaction is enhanced by low NADPH/NADP(+) ratios, which results in inhibition of ASS1 activity.

The protein resides in the cytoplasm. It is found in the perinuclear region. Its subcellular location is the nucleus. Functionally, redox sensor protein. Undergoes restructuring and subcellular redistribution in response to changes in intracellular NADPH/NADP(+) levels. At low NADPH concentrations the protein is found mainly as a monomer, and binds argininosuccinate synthase (ASS1), the enzyme involved in nitric oxide synthesis. Association with ASS1 impairs its activity and reduces the production of nitric oxide, which subsecuently prevents apoptosis. Under normal NADPH concentrations, the protein is found as a dimer and hides the binding site for ASS1. The homodimer binds one molecule of NADPH. Has higher affinity for NADPH than for NADP(+). Binding to NADPH is necessary to form a stable dimer. The sequence is that of NmrA-like family domain-containing protein 1 (NMRAL1) from Homo sapiens (Human).